The chain runs to 223 residues: UPF0441 protein YgiB (223 aa).

The segment covering 178–195 (TVPKTAMAPKPATTTTVT) has biased composition (low complexity). The segment at 178-223 (TVPKTAMAPKPATTTTVTRGGFGESVAKQSTMQRSAAGTSTRSMGG) is disordered. Residues 204 to 223 (AKQSTMQRSAAGTSTRSMGG) are compositionally biased toward polar residues.

It belongs to the UPF0441 family.

The chain is UPF0441 protein YgiB from Salmonella heidelberg (strain SL476).